A 387-amino-acid polypeptide reads, in one-letter code: MKQAVIVDCIRTPMGRSKAGVFRNVRAETLSAELMKGLLLRNPQLDPNAIEDVIWGCVQQTLEQGFNIARNASLLAGIPKTAGAVTVNRLCGSSMEAIHQAARAIMTGMGDTFIIGGVEHMGHVPMNHGVDFHPGLANNVAKASGMMGLTAEMLGKLHGISREQQDAFAVRSHQRAHAATVEGRFAKEIYAIEGHDANGALIKVLHDEVIRPETSMESLAALRPVFDPANGTVTAGTSSALSDGASAMLVMEESKARALGLPIRARIRSMAVAGCDAAIMGYGPVPATQKALARAGITVNDLDVIELNEAFAAQSLPCVKDLGLLDVVDEKINLNGGAIALGHPLGCSGARISTTLINLMEHKDATLGLATMCIGLGQGIATVFERV.

Cysteine 91 functions as the Acyl-thioester intermediate in the catalytic mechanism. Catalysis depends on proton acceptor residues histidine 343 and cysteine 373.

The protein belongs to the thiolase-like superfamily. Thiolase family. In terms of assembly, heterotetramer of two alpha chains (FadB) and two beta chains (FadA).

The protein localises to the cytoplasm. It catalyses the reaction an acyl-CoA + acetyl-CoA = a 3-oxoacyl-CoA + CoA. It functions in the pathway lipid metabolism; fatty acid beta-oxidation. Its function is as follows. Catalyzes the final step of fatty acid oxidation in which acetyl-CoA is released and the CoA ester of a fatty acid two carbons shorter is formed. This chain is 3-ketoacyl-CoA thiolase, found in Shewanella sp. (strain MR-7).